A 39-amino-acid polypeptide reads, in one-letter code: Fructose 5-dehydrogenase [NADP(+)] (39 aa).

The catalysed reaction is D-fructose + NADP(+) = 5-dehydro-D-fructose + NADPH + H(+). This is Fructose 5-dehydrogenase [NADP(+)] from Erwinia citreus.